The sequence spans 635 residues: Probable potassium transport system protein Kup (635 aa).

12 consecutive transmembrane segments (helical) span residues 20-40 (MALV…SPLY), 62-82 (VLSL…VTII), 111-131 (AYVV…DGVI), 149-169 (PSLH…VFMV), 180-200 (VFGP…IWNI), 223-243 (GWHG…GEAL), 259-279 (WYFF…ALVL), 292-312 (AVPS…AVIA), 349-369 (IYVP…VLIF), 377-397 (VAYG…LALV), 408-428 (WVLP…IANG), and 429-449 (AKLL…FTLM).

It belongs to the HAK/KUP transporter (TC 2.A.72) family.

It localises to the cell inner membrane. The catalysed reaction is K(+)(in) + H(+)(in) = K(+)(out) + H(+)(out). Functionally, transport of potassium into the cell. Likely operates as a K(+):H(+) symporter. The protein is Probable potassium transport system protein Kup of Xanthomonas campestris pv. campestris (strain 8004).